Here is a 512-residue protein sequence, read N- to C-terminus: Maturase K (512 aa).

Belongs to the intron maturase 2 family. MatK subfamily.

It is found in the plastid. The protein localises to the chloroplast. Functionally, usually encoded in the trnK tRNA gene intron. Probably assists in splicing its own and other chloroplast group II introns. This is Maturase K from Lilium henryi (Henry's lily).